Here is a 202-residue protein sequence, read N- to C-terminus: Small ribosomal subunit protein uS4c (202 aa).

The 63-residue stretch at 90 to 152 folds into the S4 RNA-binding domain; sequence MRLDNLIFRL…AASKSLVNTY (63 aa).

Belongs to the universal ribosomal protein uS4 family. In terms of assembly, part of the 30S ribosomal subunit. Contacts protein S5. The interaction surface between S4 and S5 is involved in control of translational fidelity.

It localises to the plastid. It is found in the chloroplast. Functionally, one of the primary rRNA binding proteins, it binds directly to 16S rRNA where it nucleates assembly of the body of the 30S subunit. Its function is as follows. With S5 and S12 plays an important role in translational accuracy. This is Small ribosomal subunit protein uS4c (rps4) from Emiliania huxleyi (Coccolithophore).